Here is a 790-residue protein sequence, read N- to C-terminus: Probable quinate dehydrogenase (quinone) (790 aa).

The next 4 membrane-spanning stretches (helical) occupy residues Gly22–Leu42, Ala48–Leu68, Leu77–Leu94, and Ala106–Val126. The interval Arg171 to Gln200 is disordered. The span at Gly174–Gly187 shows a compositional bias: low complexity.

Belongs to the bacterial PQQ dehydrogenase family. The cofactor is pyrroloquinoline quinone.

Its subcellular location is the cell membrane. The enzyme catalyses L-quinate + a quinone = 3-dehydroquinate + a quinol. Its pathway is aromatic compound metabolism; 3,4-dihydroxybenzoate biosynthesis; 3-dehydroquinate from D-quinate (PQQ route): step 1/1. This is Probable quinate dehydrogenase (quinone) (qumA) from Xanthomonas campestris pv. juglandis (Xanthomonas arboricola pv. juglandis).